Consider the following 142-residue polypeptide: Probable signal recognition particle 19 kDa protein (142 aa).

Residues 115–142 are disordered; sequence KTRQPGYTAPSVASSSAAAAGKKNKKKK. Positions 123–135 are enriched in low complexity; sequence APSVASSSAAAAG.

Belongs to the SRP19 family. In terms of assembly, component of a signal recognition particle complex that consists of a 7SL RNA molecule of 300 nucleotides and six protein subunits: srpa-72, srpa-68, SRP54, F37F2.2/SRP19, F25G6.8/SRP14 and ZK512.4/SRP9.

The protein resides in the cytoplasm. The protein localises to the nucleus. Its subcellular location is the nucleolus. Component of the signal recognition particle (SRP) complex, a ribonucleoprotein complex that mediates the cotranslational targeting of secretory and membrane proteins to the endoplasmic reticulum (ER). Binds directly to 7SL RNA. Mediates binding of SRP54 to the SRP complex. The polypeptide is Probable signal recognition particle 19 kDa protein (Caenorhabditis elegans).